The primary structure comprises 230 residues: Stachydrine N-demethylase reductase subunit Stc3 (230 aa).

The protein belongs to the non-flavoprotein flavin reductase family. As to quaternary structure, the system is probably composed of an oxygenase subunit (Stc2) and two reductase subunits (Stc3 and Stc4).

In terms of biological role, reductase involved in the catabolism of stachydrine (L-proline betaine), a source of carbon and nitrogen. Part of a Rieske-type oxygenase system that catalyzes the demethylation of stachydrine to produce N-methyl-L-proline (monomethylproline). This subunit is probably involved in the transfer of electrons from NAD(P)H to the catalytic subunit Stc2. This Rhizobium meliloti (strain 1021) (Ensifer meliloti) protein is Stachydrine N-demethylase reductase subunit Stc3.